Consider the following 130-residue polypeptide: Protein LLP homolog (130 aa).

Residues 1-21 (MAKSLRSKWKRKMRAEKRKKN) show a composition bias toward basic residues. Disordered stretches follow at residues 1–23 (MAKSLRSKWKRKMRAEKRKKNAP) and 57–76 (QEKMQCEEGRCDGADEEKDD). Residues 10-78 (KRKMRAEKRK…GADEEKDDMK (69 aa)) are a coiled coil. K78 is covalently cross-linked (Glycyl lysine isopeptide (Lys-Gly) (interchain with G-Cter in SUMO2)). Residues 104-124 (RQRKRLKAKREKKRGKSRAKA) are compositionally biased toward basic residues. A disordered region spans residues 104–130 (RQRKRLKAKREKKRGKSRAKAAKGLAW).

This sequence belongs to the learning-associated protein family. In terms of assembly, interacts with CTCF, MYO1C and with the transcriptional machinery, including RNA polymerase II and TBP. Widely expressed, with high levels in testis and spleen and low levels in heart. In the brain, expressed in the cortex and hippocampus, and at very low levels in the cerebellum.

It localises to the nucleus. The protein resides in the nucleolus. Its subcellular location is the chromosome. In terms of biological role, in hippocampal neurons, regulates dendritic and spine growth and synaptic transmission. This Mus musculus (Mouse) protein is Protein LLP homolog (Llph).